The chain runs to 320 residues: o-succinylbenzoate synthase (320 aa).

K133 functions as the Proton donor in the catalytic mechanism. Positions 161, 190, and 213 each coordinate Mg(2+). The active-site Proton acceptor is K235.

It belongs to the mandelate racemase/muconate lactonizing enzyme family. MenC type 1 subfamily. A divalent metal cation is required as a cofactor.

It catalyses the reaction (1R,6R)-6-hydroxy-2-succinyl-cyclohexa-2,4-diene-1-carboxylate = 2-succinylbenzoate + H2O. Its pathway is quinol/quinone metabolism; 1,4-dihydroxy-2-naphthoate biosynthesis; 1,4-dihydroxy-2-naphthoate from chorismate: step 4/7. It functions in the pathway quinol/quinone metabolism; menaquinone biosynthesis. Functionally, converts 2-succinyl-6-hydroxy-2,4-cyclohexadiene-1-carboxylate (SHCHC) to 2-succinylbenzoate (OSB). This chain is o-succinylbenzoate synthase, found in Salmonella newport (strain SL254).